Reading from the N-terminus, the 58-residue chain is Sperm protamine P1 (58 aa).

Residues 1-58 form a disordered region; it reads MARYRRRSRSRSRSRYGRRRRRSRSRRRRSRRRRRRRGRRGRGYHRRSPHRRRRRRRR.

This sequence belongs to the protamine P1 family. In terms of tissue distribution, testis.

The protein resides in the nucleus. It localises to the chromosome. Protamines substitute for histones in the chromatin of sperm during the haploid phase of spermatogenesis. They compact sperm DNA into a highly condensed, stable and inactive complex. The polypeptide is Sperm protamine P1 (PRM1) (Monodelphis domestica (Gray short-tailed opossum)).